The following is a 349-amino-acid chain: Autophagy-related protein 3 (349 aa).

The tract at residues A95–N173 is flexible region. C244 functions as the Glycyl thioester intermediate in the catalytic mechanism. A handle region region spans residues S248–Q325. The short motif at W306–V309 is the ATG8 interaction motif (AIM) element.

This sequence belongs to the ATG3 family. In terms of assembly, monomer. Interacts with ATG8 through an intermediate thioester bond between Cys-244 and the C-terminal Gly of ATG8. Interacts with the C-terminal region of the E1-like ATG7 enzyme. Also interacts with the ATG12-ATG5 conjugate.

The protein localises to the cytoplasm. Its function is as follows. E2 conjugating enzyme required for the cytoplasm to vacuole transport (Cvt) and autophagy. Required for selective autophagic degradation of the nucleus (nucleophagy) as well as for mitophagy which contributes to regulate mitochondrial quantity and quality by eliminating the mitochondria to a basal level to fulfill cellular energy requirements and preventing excess ROS production. Responsible for the E2-like covalent binding of phosphatidylethanolamine to the C-terminal Gly of ATG8. The ATG12-ATG5 conjugate plays a role of an E3 and promotes the transfer of ATG8 from ATG3 to phosphatidylethanolamine (PE). This step is required for the membrane association of ATG8. The formation of the ATG8-phosphatidylethanolamine conjugate is essential for autophagy and for the cytoplasm to vacuole transport (Cvt). The ATG8-PE conjugate mediates tethering between adjacent membranes and stimulates membrane hemifusion, leading to expansion of the autophagosomal membrane during autophagy. Autophagy is required for proper vegetative growth, asexual/sexual reproduction, and full virulence. Autophagy is particularly involved in the biosynthesis of deoxynivalenol (DON), an important virulence determinant. The polypeptide is Autophagy-related protein 3 (Gibberella zeae (strain ATCC MYA-4620 / CBS 123657 / FGSC 9075 / NRRL 31084 / PH-1) (Wheat head blight fungus)).